Consider the following 695-residue polypeptide: DNA ligase (695 aa).

Residues 44 to 48 (DAEYD), 93 to 94 (SL), and E124 contribute to the NAD(+) site. The active-site N6-AMP-lysine intermediate is the K126. NAD(+) is bound by residues R147, E187, K304, and K328. 4 residues coordinate Zn(2+): C422, C425, C440, and C445. Residues 606-695 (TVQGPLAGKT…GIEVEAAARS (90 aa)) form the BRCT domain.

Belongs to the NAD-dependent DNA ligase family. LigA subfamily. Mg(2+) serves as cofactor. Requires Mn(2+) as cofactor.

The catalysed reaction is NAD(+) + (deoxyribonucleotide)n-3'-hydroxyl + 5'-phospho-(deoxyribonucleotide)m = (deoxyribonucleotide)n+m + AMP + beta-nicotinamide D-nucleotide.. DNA ligase that catalyzes the formation of phosphodiester linkages between 5'-phosphoryl and 3'-hydroxyl groups in double-stranded DNA using NAD as a coenzyme and as the energy source for the reaction. It is essential for DNA replication and repair of damaged DNA. This Thermomicrobium roseum (strain ATCC 27502 / DSM 5159 / P-2) protein is DNA ligase.